We begin with the raw amino-acid sequence, 1203 residues long: DNA-directed RNA polymerase I subunit RPA135 (1203 aa).

The residue at position 2 (serine 2) is an N-acetylserine. Position 81 is a phosphoserine (serine 81). A C4-type zinc finger spans residues 1104 to 1131 (CRECGSILTTQQSVPRIGSISTVCCRRC). Serine 1156 carries the phosphoserine modification.

This sequence belongs to the RNA polymerase beta chain family. In terms of assembly, component of the RNA polymerase I (Pol I) complex consisting of 14 subunits: RPA135, RPA190, RPC40, RPA14, RPB5, RPO26, RPA43, RPB8, RPA12, RPB10, RPC19, RPC10, RPA49 and RPA34. The complex is composed of a horseshoe-shaped core containing ten subunits (RPA135, RPA190, RPB5, RPO26, RPB8, RPB10, RPC10, RPA12, RPC19 and RPC40) where RPA135 and RPA190 form the DNA-binding cleft. Outside of the core, RPA14 and RPA43 form the stalk that mediates interactions with transcription initiation factors and newly synthesized RNA.

The protein localises to the nucleus. Its subcellular location is the nucleolus. It carries out the reaction RNA(n) + a ribonucleoside 5'-triphosphate = RNA(n+1) + diphosphate. Its function is as follows. DNA-dependent RNA polymerases catalyze the transcription of DNA into RNA using the four ribonucleoside triphosphates as substrates. Component of RNA polymerase I (Pol I) which synthesizes ribosomal RNA precursors. Besides, RNA polymerase I has intrinsic RNA cleavage activity. RPA190 and RPA135 both contribute to the polymerase catalytic activity and together form the Pol I active center. In addition, subunit RPA12 contributes a catalytic zinc ribbon that is required for RNA cleavage by Pol I. A single stranded DNA template strand of the promoter is positioned within the central active site cleft of Pol I. A bridging helix emanates from RPA190 and crosses the cleft near the catalytic site and is thought to promote translocation of Pol I by acting as a ratchet that moves the RNA-DNA hybrid through the active site by switching from straight to bent conformations at each step of nucleotide addition. This Saccharomyces cerevisiae (strain ATCC 204508 / S288c) (Baker's yeast) protein is DNA-directed RNA polymerase I subunit RPA135 (RPA135).